The sequence spans 417 residues: Tyrosine--tRNA ligase (417 aa).

Residue Tyr39 participates in L-tyrosine binding. Residues 44–53 (PTAPSLHAGG) carry the 'HIGH' region motif. L-tyrosine-binding residues include Tyr176 and Gln180. Positions 236-240 (KMGKS) match the 'KMSKS' region motif. Lys239 lines the ATP pocket. In terms of domain architecture, S4 RNA-binding spans 350-417 (IGVLALMVLA…KKRHVLIRPA (68 aa)).

The protein belongs to the class-I aminoacyl-tRNA synthetase family. TyrS type 1 subfamily. As to quaternary structure, homodimer.

Its subcellular location is the cytoplasm. It catalyses the reaction tRNA(Tyr) + L-tyrosine + ATP = L-tyrosyl-tRNA(Tyr) + AMP + diphosphate + H(+). Its function is as follows. Catalyzes the attachment of tyrosine to tRNA(Tyr) in a two-step reaction: tyrosine is first activated by ATP to form Tyr-AMP and then transferred to the acceptor end of tRNA(Tyr). The protein is Tyrosine--tRNA ligase of Brucella suis biovar 1 (strain 1330).